Here is a 1182-residue protein sequence, read N- to C-terminus: DNA-directed RNA polymerase subunit beta (1182 aa).

This sequence belongs to the RNA polymerase beta chain family. The RNAP catalytic core consists of 2 alpha, 1 beta, 1 beta' and 1 omega subunit. When a sigma factor is associated with the core the holoenzyme is formed, which can initiate transcription.

It catalyses the reaction RNA(n) + a ribonucleoside 5'-triphosphate = RNA(n+1) + diphosphate. Functionally, DNA-dependent RNA polymerase catalyzes the transcription of DNA into RNA using the four ribonucleoside triphosphates as substrates. This chain is DNA-directed RNA polymerase subunit beta, found in Fervidobacterium nodosum (strain ATCC 35602 / DSM 5306 / Rt17-B1).